The sequence spans 190 residues: Hypoxanthine/guanine phosphoribosyltransferase (190 aa).

It belongs to the purine/pyrimidine phosphoribosyltransferase family. Archaeal HPRT subfamily. Homodimer.

The protein localises to the cytoplasm. It catalyses the reaction IMP + diphosphate = hypoxanthine + 5-phospho-alpha-D-ribose 1-diphosphate. The catalysed reaction is GMP + diphosphate = guanine + 5-phospho-alpha-D-ribose 1-diphosphate. The protein operates within purine metabolism; IMP biosynthesis via salvage pathway; IMP from hypoxanthine: step 1/1. In terms of biological role, catalyzes a salvage reaction resulting in the formation of IMP that is energically less costly than de novo synthesis. The protein is Hypoxanthine/guanine phosphoribosyltransferase of Methanobacterium paludis (strain DSM 25820 / JCM 18151 / SWAN1).